The primary structure comprises 230 residues: dITP/XTP pyrophosphatase (230 aa).

Residue 7–12 coordinates substrate; it reads STNPGK. The Mg(2+) site is built by glutamate 41 and aspartate 70. The active-site Proton acceptor is the aspartate 70. Residues serine 71, 181 to 184, lysine 205, and 210 to 211 each bind substrate; these read FGYD and HR.

This sequence belongs to the HAM1 NTPase family. In terms of assembly, homodimer. Mg(2+) serves as cofactor.

It catalyses the reaction XTP + H2O = XMP + diphosphate + H(+). It carries out the reaction dITP + H2O = dIMP + diphosphate + H(+). The catalysed reaction is ITP + H2O = IMP + diphosphate + H(+). Functionally, pyrophosphatase that catalyzes the hydrolysis of nucleoside triphosphates to their monophosphate derivatives, with a high preference for the non-canonical purine nucleotides XTP (xanthosine triphosphate), dITP (deoxyinosine triphosphate) and ITP. Seems to function as a house-cleaning enzyme that removes non-canonical purine nucleotides from the nucleotide pool, thus preventing their incorporation into DNA/RNA and avoiding chromosomal lesions. The protein is dITP/XTP pyrophosphatase of Anaeromyxobacter sp. (strain Fw109-5).